The chain runs to 322 residues: Malate dehydrogenase (322 aa).

NAD(+)-binding positions include 10-15 (GSGMIG) and Asp34. Arg83 and Arg89 together coordinate substrate. NAD(+) is bound by residues Asn96 and 119–121 (ITN). Residues Asn121 and Arg152 each contribute to the substrate site. Catalysis depends on His176, which acts as the Proton acceptor.

This sequence belongs to the LDH/MDH superfamily. MDH type 3 family.

The catalysed reaction is (S)-malate + NAD(+) = oxaloacetate + NADH + H(+). Catalyzes the reversible oxidation of malate to oxaloacetate. The sequence is that of Malate dehydrogenase from Mesorhizobium japonicum (strain LMG 29417 / CECT 9101 / MAFF 303099) (Mesorhizobium loti (strain MAFF 303099)).